The sequence spans 753 residues: Putative cyclic nucleotide-gated ion channel 8 (753 aa).

Over 1–111 (MYKSQYISGH…DKTLLLWNRM (111 aa)) the chain is Cytoplasmic. Residues 112 to 132 (FVISCILAVSVDPLFFYLPIV) form a helical membrane-spanning segment. Residues 133–145 (DNSKNCIGIDSKL) lie on the Extracellular side of the membrane. The chain crosses the membrane as a helical span at residues 146–166 (AVTTTTLRTIIDVFYLTRMAL). Over 167–199 (QFRTAYIAPSSRVFGRGELVIDPAKIAERYLTR) the chain is Cytoplasmic. The helical transmembrane segment at 200-220 (YFIVDFLAVLPLPQIAVWKFL) threads the bilayer. Over 221–233 (HGSKGTDVLPTKQ) the chain is Extracellular. A helical membrane pass occupies residues 234–254 (ALLHIVITQYIPRFVRFIPLT). Residues 255–274 (SELKKTAGAFAEGAWAGAAY) are Cytoplasmic-facing. A helical membrane pass occupies residues 275–295 (YLLWYMLASHITGAFWYMLSV). Over 296–402 (ERNDTCLRSA…QGLQTSTYPG (107 aa)) the chain is Extracellular. The helical transmembrane segment at 403-423 (EVLFSIAIAVAGLLLFALLIG) threads the bilayer. The Cytoplasmic portion of the chain corresponds to 424 to 753 (NMQTYLQSLT…FEALDTDDLN (330 aa)). A nucleoside 3',5'-cyclic phosphate contacts are provided by residues 508–638 (LFAN…TFRF) and glutamate 579. Positions 624-639 (FRRLHSRQVQQTFRFY) are calmodulin-binding. An IQ domain is found at 644–673 (RTWAACFIQAAWRRHLRRKIAELRRKEEEE). A disordered region spans residues 731 to 753 (KSLMNLTKPSEPDFEALDTDDLN). Positions 742–753 (PDFEALDTDDLN) are enriched in acidic residues.

This sequence belongs to the cyclic nucleotide-gated cation channel (TC 1.A.1.5) family. In terms of assembly, homotetramer or heterotetramer.

The protein localises to the cell membrane. In terms of biological role, putative cyclic nucleotide-gated ion channel. The polypeptide is Putative cyclic nucleotide-gated ion channel 8 (CNGC8) (Arabidopsis thaliana (Mouse-ear cress)).